Here is a 331-residue protein sequence, read N- to C-terminus: N-arachidonyl glycine receptor (331 aa).

The Extracellular segment spans residues 1–26 (MATLSNHNQLDLSNGSHPEEYKIAAL). Asn-14 is a glycosylation site (N-linked (GlcNAc...) asparagine). The helical transmembrane segment at 27–47 (VFYSCIFLIGLFVNVTALWVF) threads the bilayer. The Cytoplasmic portion of the chain corresponds to 48–56 (SCTTKKRTT). Residues 57–77 (VTIYMMNVALLDLVFILSLPF) traverse the membrane as a helical segment. At 78–95 (RMFYYAKGEWPFGEYFCH) the chain is on the extracellular side. The cysteines at positions 94 and 172 are disulfide-linked. Residues 96–116 (ILGALVVFYPSLALWLLAFIS) form a helical membrane-spanning segment. Topologically, residues 117-138 (ADRYMAIVQPKYAKELKNTGKA) are cytoplasmic. Residues 139–159 (VLACGGVWVMTLTTTVPLLLL) form a helical membrane-spanning segment. Over 160 to 191 (YEDPDKASSPATCLKISDITHLKAVNVLNFTR) the chain is Extracellular. A glycan (N-linked (GlcNAc...) asparagine) is linked at Asn-188. The chain crosses the membrane as a helical span at residues 192 to 212 (LIFFFLIPLFIMIGCYVVIIH). Residues 213 to 236 (SLLRGQTSKLKPKVKEKSIRIIMT) are Cytoplasmic-facing. A helical membrane pass occupies residues 237-257 (LLLQVLVCFVPFHICFAVLML). Over 258 to 268 (QGQENSYSPWG) the chain is Extracellular. Residues 269–289 (AFTTFLMNLSTCLDVVLYYIV) traverse the membrane as a helical segment. At 290–331 (SKQFQARVISVMLYRNYLRSVRRKSVRSGSLRSLSNMNSEML) the chain is on the cytoplasmic side. Ser-322 is modified (phosphoserine).

This sequence belongs to the G-protein coupled receptor 1 family. Expressed in the eye including cornea, retina, iris and ciliary epithelium (at protein level). Expressed in spleen, liver and lymphocytes with highest expression levels in intestinal intraepithelial lymphocytes.

It is found in the cell membrane. Its subcellular location is the cytoplasmic vesicle membrane. G protein-coupled receptor (GPCR) that plays a role in diverse physiological processes particularly within the immune and nervous systems. Becomes active when triggered by various endogenous ligands including endocannabinoid N-arachidonyl glycine (NAGly), delta-9-tetrahydrocannabinol or resolvin D2/RvD2 derived from the omega-3 fatty acid docosahexaenoic acid (DHA). Upon RvD2 binding, facilitates the resolution of inflammation, aiding in tissue repair and homeostasis. Mechanistically, RvD2 ligation initiates Galphas protein coupling, activation of cAMP-PKA signaling pathway and phosphorylation of STAT3, leading to RvD2-stimulated macrophage phagocytosis. Mediates NAGly-induced process of reorganization of actin filaments and induction of acrosomal exocytosis. Activation by N-arachidonoyl glycine (NAGly) can also induce apoptosis in macrophages. Plays a role in homeostasis of CD8+ subsets of intraepithelial lymphocytes (IELs) (CD8alphaalpha and CD8alphabeta IELs) in small intestine by supporting preferential migration of CD8alphaalpha T-cells to intraepithelial compartment over lamina propria compartment, and by mediating their reconstitution into small intestine after bone marrow transplant. Also participates in hypotensive responses, mediating reduction in intraocular and blood pressure. This Mus musculus (Mouse) protein is N-arachidonyl glycine receptor.